The sequence spans 424 residues: Chloroquine resistance transporter (424 aa).

Residues 1–10 (MTILKKKKKG) show a composition bias toward basic residues. Positions 1 to 32 (MTILKKKKKGSPQITPDERYRELDSHAQNESE) are disordered. Residues 1-57 (MTILKKKKKGSPQITPDERYRELDSHAQNESEIQEDVPISRKIANFLKLAYNEIREN) lie on the Cytoplasmic side of the membrane. Residues 16–29 (PDERYRELDSHAQN) are compositionally biased toward basic and acidic residues. Residues 58–78 (ISIYLLIIVYLCVCVMNKLLA) form a helical membrane-spanning segment. Residues 79 to 89 (KRTLKKIGNYS) lie on the Vacuolar side of the membrane. Asparagine 87 is a glycosylation site (N-linked (GlcNAc...) asparagine). Residues 90–110 (FVTSETHNCICMVVFFALYFM) traverse the membrane as a helical segment. Topologically, residues 111–124 (FGRRVMSAKERHRN) are cytoplasmic. A helical transmembrane segment spans residues 125–145 (FGVQFLLISLLDACSVIIAFI). The Vacuolar segment spans residues 146-153 (GLTRTTGN). Residues 154–174 (IQSFVMQLSIPINMFFCFLIL) traverse the membrane as a helical segment. Topologically, residues 175 to 179 (RYRYH) are cytoplasmic. A helical membrane pass occupies residues 180–200 (LFNYVGAFIIVVTIAVVEFML). At 201 to 208 (SFETQEEN) the chain is on the vacuolar side. A helical transmembrane segment spans residues 209-229 (SIVFNLVLIASLIPLSFSNMT). Topologically, residues 230-246 (REIVFKKYKINILRLNA) are cytoplasmic. A helical transmembrane segment spans residues 247–267 (VVSFFQIFTSCLMLPMYTLPF). Residues 268-316 (LKQINLPFSEIGTNIKNGFRCLFLGQNTIVENCGLGMSKMCDDCEGAWK) are Vacuolar-facing. 2 disulfides stabilise this stretch: cysteine 288-cysteine 311 and cysteine 300-cysteine 308. Residues 317-337 (TFIAYSFFNICDNLITSFIIE) traverse the membrane as a helical segment. The Cytoplasmic segment spans residues 338-345 (KFSTMTYT). Residues 346–366 (IVSCIQGPAIAIAYYFKFLAG) form a helical membrane-spanning segment. The Vacuolar segment spans residues 367–376 (DAVMQPRMLD). Residues 377 to 397 (FVTLFGYLFGSIIYRIGNIIL) form a helical membrane-spanning segment. The Cytoplasmic segment spans residues 398–424 (EKKRMMEAGNDDDSEGELTNADSIITH).

The protein belongs to the CRT-like transporter family.

The protein resides in the vacuole membrane. Nutrient transporter. Involved in maintaining the osmotic homeostasis of the digestive vacuole. This chain is Chloroquine resistance transporter, found in Plasmodium vivax (strain Salvador I).